The following is a 651-amino-acid chain: Protein SCARECROW 1 (651 aa).

2 disordered regions span residues 1–33 (MGSS…ITSL) and 188–277 (SDPA…KQRD). Pro residues predominate over residues 190-228 (PAPPPPPPPSHPALLPPDATAPPPPPTSVAALPPPPPPQ). A coiled-coil region spans residues 253 to 280 (TAEETAAAAAAAKERKEEQRRKQRDEEG). A compositionally biased stretch (low complexity) spans 254-263 (AEETAAAAAA). Basic and acidic residues predominate over residues 264–277 (AKERKEEQRRKQRD). One can recognise a GRAS domain in the interval 274–644 (KQRDEEGLHL…LCLLTASAWR (371 aa)). Positions 281-345 (LHLLTLLLQC…VSSCLGLYAP (65 aa)) are leucine repeat I (LRI). Residues 288 to 292 (LQCAE) carry the LxCxE motif motif. Residues 364 to 429 (FQVFNGISPF…GGPPRVRLTG (66 aa)) form a VHIID region. A VHIID motif is present at residues 395 to 399 (VHIID). Residues 439-471 (ATGKRLSDFADTLGLPFEFCPVADKAGNLDPEK) form a leucine repeat II (LRII) region. The PFYRE stretch occupies residues 480 to 567 (VAVHWLRHSL…QQLLSREIRN (88 aa)). Positions 570–644 (AVGGPARTGD…LCLLTASAWR (75 aa)) are SAW.

It belongs to the GRAS family. In terms of assembly, interacts with SHR1, but not with SHR2. As to expression, expressed in the initial daughter cell before its asymmetric division and remains expressed in the endodermal cell layer after the division.

Its subcellular location is the nucleus. Its function is as follows. Transcription factor required for quiescent center cells specification and maintenance of surrounding stem cells, and for the asymmetric cell division involved in radial pattern formation in roots. Essential for cell division but not differentiation of the ground tissue. Regulates the radial organization of the shoot axial organs. Restricts SHR movment and sequesters it into the nucleus of the endodermis. In Oryza sativa subsp. japonica (Rice), this protein is Protein SCARECROW 1 (SCR1).